We begin with the raw amino-acid sequence, 95 residues long: Co-chaperonin GroES (95 aa).

This sequence belongs to the GroES chaperonin family. In terms of assembly, heptamer of 7 subunits arranged in a ring. Interacts with the chaperonin GroEL.

It localises to the cytoplasm. Together with the chaperonin GroEL, plays an essential role in assisting protein folding. The GroEL-GroES system forms a nano-cage that allows encapsulation of the non-native substrate proteins and provides a physical environment optimized to promote and accelerate protein folding. GroES binds to the apical surface of the GroEL ring, thereby capping the opening of the GroEL channel. In Beijerinckia indica subsp. indica (strain ATCC 9039 / DSM 1715 / NCIMB 8712), this protein is Co-chaperonin GroES.